The primary structure comprises 551 residues: Membrane protein insertase YidC (551 aa).

A helical transmembrane segment spans residues 3-23 (ANHIRILLLVTIAIMFISLMG). Residues 33 to 55 (NTKQQTSATQNNSHYDNADSSTN) are disordered. The next 3 membrane-spanning stretches (helical) occupy residues 361-381 (LVGNWGLAIILVTCLIKLIFY), 431-451 (LSGCLPMLIQIPIFISLYWVL), and 504-524 (VMMFLPVIFTFLFASFPSGLV).

It belongs to the OXA1/ALB3/YidC family. Type 1 subfamily. In terms of assembly, interacts with the Sec translocase complex via SecD. Specifically interacts with transmembrane segments of nascent integral membrane proteins during membrane integration.

The protein resides in the cell inner membrane. Functionally, required for the insertion and/or proper folding and/or complex formation of integral membrane proteins into the membrane. Involved in integration of membrane proteins that insert both dependently and independently of the Sec translocase complex, as well as at least some lipoproteins. Aids folding of multispanning membrane proteins. In Francisella tularensis subsp. holarctica (strain OSU18), this protein is Membrane protein insertase YidC.